The following is a 97-amino-acid chain: Late transcription unit B protein (97 aa).

Residues S24–E45 form a disordered region.

This Chlamydia trachomatis serovar D (strain ATCC VR-885 / DSM 19411 / UW-3/Cx) protein is Late transcription unit B protein (ltuB).